Consider the following 186-residue polypeptide: MQRWTLWAAAFLTLHSAQAFPQTDISISPALPELPLPSLCPLFWMEFKGHCYRFFPLNKTWAEADLYCSEFSVGRKSAKLASIHSWEENVFVYDLVNSCVPGIPADVWTGLHDHRQEGQFEWTDGSSYDYSYWDGSQPDDGVHADPEEEDCVQIWYRPTSALRSWNDNTCSRKFPFVCKIPSLTIH.

The signal sequence occupies residues 1 to 19 (MQRWTLWAAAFLTLHSAQA). The 133-residue stretch at 47 to 179 (FKGHCYRFFP…CSRKFPFVCK (133 aa)) folds into the C-type lectin domain. A glycan (N-linked (GlcNAc...) asparagine) is linked at Asn58. Disulfide bonds link Cys68–Cys178 and Cys151–Cys170.

It localises to the secreted. The sequence is that of C-type lectin domain family 19 member A from Homo sapiens (Human).